The following is a 432-amino-acid chain: MTNVVVVGSQWGDEGKGKIVDWLSERADIVVRYQGGHNAGHTLVIDGTSYKLSLLPSGVVRPGKMAVIGNGVVVDPHALIAEIEKLAGQGVTITPDNLRVADNATLILSLHRELDAMREDAASNSGTKIGTTRRGIGPAYEDKVGRRAIRVMDLADLDSLPGKVDRILTHHNALRRGLGVAEVSHQTIMDELTSVAERVLPFRDTVWLFLDKERRRGARILFEGAQGSLLDIDHGTYPFVTSSNTVAGQAAAGSGMGPGSLGYILGITKAYTTRVGEGPFPTELKDEIGEFLGQKGHEFGVVTGRKRRCGWFDAALVRQSVATNGITGIALTKLDVLDGLEELKICVGYMLDGEQIDHLPASQGAQARVEPIYITLEGWKESTVGARSWADLPAQAIKYVRQVEELIGAPVALLSTSPERDDTILVTDPFED.

GTP is bound by residues 12 to 18 and 40 to 42; these read GDEGKGK and GHT. The active-site Proton acceptor is Asp13. Positions 13 and 40 each coordinate Mg(2+). Residues 13–16, 38–41, Thr132, Arg146, Gln226, Thr241, and Arg305 contribute to the IMP site; these read DEGK and NAGH. The active-site Proton donor is the His41. Residue 301–307 participates in substrate binding; the sequence is VVTGRKR. GTP-binding positions include Arg307, 333 to 335, and 415 to 417; these read KLD and STS.

The protein belongs to the adenylosuccinate synthetase family. Homodimer. The cofactor is Mg(2+).

It localises to the cytoplasm. The enzyme catalyses IMP + L-aspartate + GTP = N(6)-(1,2-dicarboxyethyl)-AMP + GDP + phosphate + 2 H(+). The protein operates within purine metabolism; AMP biosynthesis via de novo pathway; AMP from IMP: step 1/2. In terms of biological role, plays an important role in the de novo pathway of purine nucleotide biosynthesis. Catalyzes the first committed step in the biosynthesis of AMP from IMP. In Rhizobium etli (strain CIAT 652), this protein is Adenylosuccinate synthetase.